We begin with the raw amino-acid sequence, 122 residues long: Large ribosomal subunit protein bL12 (122 aa).

It belongs to the bacterial ribosomal protein bL12 family. As to quaternary structure, homodimer. Part of the ribosomal stalk of the 50S ribosomal subunit. Forms a multimeric L10(L12)X complex, where L10 forms an elongated spine to which 2 to 4 L12 dimers bind in a sequential fashion. Binds GTP-bound translation factors.

Forms part of the ribosomal stalk which helps the ribosome interact with GTP-bound translation factors. Is thus essential for accurate translation. This is Large ribosomal subunit protein bL12 from Sodalis glossinidius (strain morsitans).